We begin with the raw amino-acid sequence, 44 residues long: MCHNALFYVPKHQLQRRPMYVFCGLAFINIKFVTIPSLRNAIRF.

This is an uncharacterized protein from Bacillus phage phi105 (Bacteriophage phi-105).